Here is a 209-residue protein sequence, read N- to C-terminus: Ribosomal RNA large subunit methyltransferase E (209 aa).

The S-adenosyl-L-methionine site is built by Gly-63, Trp-65, Asp-83, Asp-99, and Asp-124. Catalysis depends on Lys-164, which acts as the Proton acceptor.

The protein belongs to the class I-like SAM-binding methyltransferase superfamily. RNA methyltransferase RlmE family.

The protein resides in the cytoplasm. It carries out the reaction uridine(2552) in 23S rRNA + S-adenosyl-L-methionine = 2'-O-methyluridine(2552) in 23S rRNA + S-adenosyl-L-homocysteine + H(+). In terms of biological role, specifically methylates the uridine in position 2552 of 23S rRNA at the 2'-O position of the ribose in the fully assembled 50S ribosomal subunit. The chain is Ribosomal RNA large subunit methyltransferase E from Vibrio atlanticus (strain LGP32) (Vibrio splendidus (strain Mel32)).